A 336-amino-acid polypeptide reads, in one-letter code: Potassium channel subfamily K member 1 (336 aa).

Topologically, residues 1–20 are cytoplasmic; that stretch reads MLQSLAGSSCVRLVERHRSA. A helical membrane pass occupies residues 21–41; the sequence is WCFGLLVLGYLLYLVFGAVVF. Over 42-103 the chain is Extracellular; it reads SSVELPYEDL…SNASGNWNWD (62 aa). A glycan (N-linked (GlcNAc...) asparagine) is linked at asparagine 95. Residues 104 to 116 constitute an intramembrane region (helical); it reads FTSALFFASTVLS. Residues 117–122 lie within the membrane without spanning it; sequence TTGYGH. The tract at residues 117–122 is selectivity filter 1; that stretch reads TTGYGH. The Extracellular portion of the chain corresponds to 123–132; sequence TVPLSDGGKA. The chain crosses the membrane as a helical span at residues 133 to 156; that stretch reads FCIIYSVIGIPFTLLFLTAVVQRI. Topologically, residues 157–181 are cytoplasmic; sequence TVHVTRRPVLYFHIRWGFSKQMVGI. The helical transmembrane segment at 182–202 threads the bilayer; the sequence is VHAVVLGFVTVSCFFFIPAAV. Residues 203 to 211 are Extracellular-facing; that stretch reads FSVLEDDWN. Positions 212-224 form an intramembrane region, helical; sequence FLESFYFCFISLS. Positions 225–230 are selectivity filter 2; sequence TIGLGD. Residues 225-231 lie within the membrane without spanning it; it reads TIGLGDY. The Extracellular segment spans residues 232-243; the sequence is VPGEGYNQKFRE. A helical transmembrane segment spans residues 244-267; sequence LYKIGITCYLLLGLIAMLVVLETF. At 268–336 the chain is on the cytoplasmic side; it reads CELHELKKFR…SAYAEDSASH (69 aa). A Glycyl lysine isopeptide (Lys-Gly) (interchain with G-Cter in SUMO) cross-link involves residue lysine 274. Residues 293–299 are important for intracellular retention in recycling endosomes; it reads IVEHDQL.

This sequence belongs to the two pore domain potassium channel (TC 1.A.1.8) family. As to quaternary structure, homodimer; disulfide-linked. Heterodimer with KCNK2; disulfide-linked. In astrocytes, forms mostly heterodimeric potassium channels with KCNK2, with only a minor proportion of functional channels containing homodimeric KCNK1. Interacts with KCNK3 and KCNK9, forming functional heterodimeric channels. Interacts with GNG4. Identified in a complex with PSD and ARF6; interacts only with PSD that is bound to ARF6. Interacts with UBE2I. Post-translationally, sumoylation is controversial. Sumoylated by UBE2I. Not sumoylated when expressed in xenopus oocytes or mammalian cells. Sumoylation inactivates the channel, but does not interfere with expression at the cell membrane. Sumoylation of a single subunit is sufficient to silence the dimeric channel. Sumoylation of KCNK1 is sufficient to silence heterodimeric channels formed by KCNK1 and KCNK3 or KCNK9. Desumoylated by SENP1; this activates the channel. Desumoylated by SENP1; this strongly increases halothane-mediated activation of heterodimeric channels formed with KCNK9. SENP1 treatment has no effect.

Its subcellular location is the cell membrane. It localises to the recycling endosome. The protein localises to the synaptic cell membrane. The protein resides in the cytoplasmic vesicle. It is found in the perikaryon. Its subcellular location is the cell projection. It localises to the dendrite. The protein localises to the apical cell membrane. The enzyme catalyses K(+)(in) = K(+)(out). It catalyses the reaction NH4(+)(in) = NH4(+)(out). It carries out the reaction Na(+)(in) = Na(+)(out). The catalysed reaction is Rb(+)(in) = Rb(+)(out). The enzyme catalyses Cs(+)(in) = Cs(+)(out). It catalyses the reaction Li(+)(in) = Li(+)(out). It carries out the reaction L-glutamate(out) = L-glutamate(in). The catalysed reaction is chloride(in) = chloride(out). In terms of biological role, ion channel that contributes to passive transmembrane potassium transport and to the regulation of the resting membrane potential in brain astrocytes, but also in kidney and in other tissues. Forms dimeric channels through which potassium ions pass in accordance with their electrochemical gradient. The channel is selective for K(+) ions at physiological potassium concentrations and at neutral pH, but becomes permeable to Na(+) at subphysiological K(+) levels and upon acidification of the extracellular medium. The homodimer has very low potassium channel activity, when expressed in heterologous systems, and can function as weakly inward rectifying potassium channel. Channel activity is modulated by activation of serotonin receptors. Heterodimeric channels containing KCNK1 and KCNK2 have much higher activity, and may represent the predominant form in astrocytes. Heterodimeric channels containing KCNK1 and KCNK3 or KCNK9 have much higher activity. Heterodimeric channels formed by KCNK1 and KCNK9 may contribute to halothane-sensitive currents. Mediates outward rectifying potassium currents in dentate gyrus granule cells and contributes to the regulation of their resting membrane potential. Contributes to the regulation of action potential firing in dentate gyrus granule cells and down-regulates their intrinsic excitability. In astrocytes, the heterodimer formed by KCNK1 and KCNK2 is required for rapid glutamate release in response to activation of G-protein coupled receptors, such as F2R and CNR1. Required for normal ion and water transport in the kidney. Contributes to the regulation of the resting membrane potential of pancreatic beta cells. The low channel activity of homodimeric KCNK1 may be due to sumoylation. The low channel activity may be due to rapid internalization from the cell membrane and retention in recycling endosomes. Permeable to monovalent cations with ion selectivity for K(+) &gt; Rb(+) &gt;&gt; NH4(+) &gt;&gt; Cs(+) = Na(+) = Li(+). In Cavia porcellus (Guinea pig), this protein is Potassium channel subfamily K member 1.